The chain runs to 2081 residues: Non-reducing polyketide synthase terA (2081 aa).

Residues 85–190 (TLTLAFRIGV…ISLDIFAPFH (106 aa)) are N-terminal acylcarrier protein transacylase (SAT) domain (SAT). The 434-residue stretch at 316 to 749 (AQKIAIVGMA…GGNTGLLLED (434 aa)) folds into the Ketosynthase family 3 (KS3) domain. Active-site for beta-ketoacyl synthase activity residues include C488, H623, and H667. The malonyl-CoA:ACP transacylase (MAT) domain stretch occupies residues 849–1147 (LFTGQGSHYT…LTLPSLRKQE (299 aa)). The segment at 1230–1364 (QKVIKEDFGQ…CHVEYGDIKT (135 aa)) is N-terminal hotdog fold. Residues 1230–1539 (QKVIKEDFGQ…FKAIPRAVIN (310 aa)) form the PKS/mFAS DH domain. The product template (PT) domain stretch occupies residues 1259–1536 (VTGHLVNGSA…GVKFKAIPRA (278 aa)). H1262 (proton acceptor; for dehydratase activity) is an active-site residue. Residues 1392 to 1539 (YQKLDRKAAY…FKAIPRAVIN (148 aa)) form a C-terminal hotdog fold region. The active-site Proton donor; for dehydratase activity is D1452. The tract at residues 1549–1578 (KALEKSAPRQNPKATATKTTQKPQAPVPVP) is disordered. Positions 1558-1572 (QNPKATATKTTQKPQ) are enriched in low complexity. Residues 1580-1658 (KQNKAIIDDF…QVKELILKLA (79 aa)) enclose the Carrier 1 domain. S1617 carries the post-translational modification O-(pantetheine 4'-phosphoryl)serine. The disordered stretch occupies residues 1659-1700 (GSSSDENTTDTPDEEEDPATADADNTEMIRENPLESVSPNVS). The span at 1665–1677 (NTTDTPDEEEDPA) shows a compositional bias: acidic residues. The 78-residue stretch at 1699–1776 (VSSSEAMDGF…QARLAIASLM (78 aa)) folds into the Carrier 2 domain. Position 1736 is an O-(pantetheine 4'-phosphoryl)serine (S1736). Residues 1783 to 1809 (GATTPYSGSDDAKSSTSSLTAGSVLTP) are disordered. The interval 1840 to 2070 (TLFLLPDGSG…TMMREPKVNQ (231 aa)) is thioesterase (TE) domain.

It carries out the reaction 3 malonyl-CoA + acetyl-CoA + 2 H(+) = orsellinate + 3 CO2 + 4 CoA. It functions in the pathway secondary metabolite biosynthesis. Its function is as follows. Non-reducing polyketide synthase; part of the gene cluster that mediates the biosynthesis of terrein, a fungal metabolite with ecological, antimicrobial, antiproliferative, and antioxidative activities. The first step in the pathway is performed by the polyketide synthase terA that produces 4-hydroxy-6-methylpyranon (4-HMP), orsellinic acid (OA), and 2,3-dehydro-6-hydroxymellein (2,3-dehydro-6-HM) by condensing acetyl-CoA with two, three, or four malonyl-CoA units, respectively. 4-HMP and OA are not pathway intermediates, but are rather shunt or side products. 2,3-dehydro-6-HM is further converted to 6-hydroxymellein (6-HM) by the 6-hydroxymellein synthase terB. The monooxygenases terC and terD, the multicopper oxidase terE and the Kelch-like protein terF are then involved in the transformation of 6-HM to terrein. Even if they are co-regulated with the other terrein cluster genes, terH and terI seem to be dispensable for terrein production; whereas one or both of the 2 transporters terG and terJ are probably required for efficient secretion of metabolites. The chain is Non-reducing polyketide synthase terA from Aspergillus terreus (strain NIH 2624 / FGSC A1156).